The primary structure comprises 244 residues: Transcriptional activator protein CarR (244 aa).

The 66-residue stretch at 162–227 (DNSRNALLSP…HAITKALELN (66 aa)) folds into the HTH luxR-type domain. The segment at residues 186–205 (YKEVSRILGISEVTVKFHIN) is a DNA-binding region (H-T-H motif).

The protein belongs to the autoinducer-regulated transcriptional regulatory protein family.

Functionally, functions as an OHLL responsive transcriptional regulator which acts in the control of the biosynthesis of carbapenem antibiotics. The chain is Transcriptional activator protein CarR (carR) from Pectobacterium carotovorum subsp. carotovorum (Erwinia carotovora subsp. carotovora).